The chain runs to 118 residues: Probable non-functional immunoglobulin lambda variable 1-50 (118 aa).

The first 19 residues, 1–19 (MAWSSLLLTLLAHCTGSWA), serve as a signal peptide directing secretion. Residues 20–44 (QSVLTQPPSVSGAPGQRVTISCTGS) are framework-1. An Ig-like domain is found at 20–118 (QSVLTQPPSV…CKAWDNSLNA (99 aa)). A disulfide bridge links Cys41 with Cys109. The tract at residues 45 to 53 (SSNIGAGYV) is complementarity-determining-1. The segment at 54–70 (VHWYQQLPGTAPKLLIY) is framework-2. Positions 71 to 73 (GNS) are complementarity-determining-2. Residues 74–109 (NRPSGVPDQFSGSKSGTSASLAITGLQSEDEADYYC) form a framework-3 region. The interval 110–118 (KAWDNSLNA) is complementarity-determining-3.

In terms of assembly, immunoglobulins are composed of two identical heavy chains and two identical light chains; disulfide-linked.

Its subcellular location is the secreted. The protein localises to the cell membrane. Its function is as follows. Probable non-functional open reading frame (ORF) of V region of the variable domain of immunoglobulin light chains. Non-functional ORF generally cannot participate in the synthesis of a productive immunoglobulin chain due to altered V-(D)-J or switch recombination and/or splicing site (at mRNA level) and/or conserved amino acid change (protein level). Immunoglobulins, also known as antibodies, are membrane-bound or secreted glycoproteins produced by B lymphocytes. In the recognition phase of humoral immunity, the membrane-bound immunoglobulins serve as receptors which, upon binding of a specific antigen, trigger the clonal expansion and differentiation of B lymphocytes into immunoglobulins-secreting plasma cells. Secreted immunoglobulins mediate the effector phase of humoral immunity, which results in the elimination of bound antigens. The antigen binding site is formed by the variable domain of one heavy chain, together with that of its associated light chain. Thus, each immunoglobulin has two antigen binding sites with remarkable affinity for a particular antigen. The variable domains are assembled by a process called V-(D)-J rearrangement and can then be subjected to somatic hypermutations which, after exposure to antigen and selection, allow affinity maturation for a particular antigen. The polypeptide is Probable non-functional immunoglobulin lambda variable 1-50 (Homo sapiens (Human)).